A 456-amino-acid chain; its full sequence is Bifunctional protein GlmU (456 aa).

A pyrophosphorylase region spans residues 1–229; the sequence is MLNSAMSVVI…ISETDGVNNR (229 aa). UDP-N-acetyl-alpha-D-glucosamine contacts are provided by residues 11–14, Lys25, Gln76, 81–82, 103–105, Gly140, Glu154, Asn169, and Asn227; these read LAAG, GT, and YGD. Asp105 serves as a coordination point for Mg(2+). Asn227 serves as a coordination point for Mg(2+). The tract at residues 230-250 is linker; that stretch reads LQLSRLERIYQAEQAEKLLLS. Positions 251–456 are N-acetyltransferase; it reads GVMLRDPARF…QGWQRPVKKK (206 aa). UDP-N-acetyl-alpha-D-glucosamine contacts are provided by Arg333 and Lys351. His363 (proton acceptor) is an active-site residue. UDP-N-acetyl-alpha-D-glucosamine-binding residues include Tyr366 and Asn377. Residues Ala380, 386 to 387, Ser405, Ala423, and Arg440 contribute to the acetyl-CoA site; that span reads NY.

It in the N-terminal section; belongs to the N-acetylglucosamine-1-phosphate uridyltransferase family. This sequence in the C-terminal section; belongs to the transferase hexapeptide repeat family. In terms of assembly, homotrimer. It depends on Mg(2+) as a cofactor.

It localises to the cytoplasm. The catalysed reaction is alpha-D-glucosamine 1-phosphate + acetyl-CoA = N-acetyl-alpha-D-glucosamine 1-phosphate + CoA + H(+). It carries out the reaction N-acetyl-alpha-D-glucosamine 1-phosphate + UTP + H(+) = UDP-N-acetyl-alpha-D-glucosamine + diphosphate. Its pathway is nucleotide-sugar biosynthesis; UDP-N-acetyl-alpha-D-glucosamine biosynthesis; N-acetyl-alpha-D-glucosamine 1-phosphate from alpha-D-glucosamine 6-phosphate (route II): step 2/2. The protein operates within nucleotide-sugar biosynthesis; UDP-N-acetyl-alpha-D-glucosamine biosynthesis; UDP-N-acetyl-alpha-D-glucosamine from N-acetyl-alpha-D-glucosamine 1-phosphate: step 1/1. It functions in the pathway bacterial outer membrane biogenesis; LPS lipid A biosynthesis. Its function is as follows. Catalyzes the last two sequential reactions in the de novo biosynthetic pathway for UDP-N-acetylglucosamine (UDP-GlcNAc). The C-terminal domain catalyzes the transfer of acetyl group from acetyl coenzyme A to glucosamine-1-phosphate (GlcN-1-P) to produce N-acetylglucosamine-1-phosphate (GlcNAc-1-P), which is converted into UDP-GlcNAc by the transfer of uridine 5-monophosphate (from uridine 5-triphosphate), a reaction catalyzed by the N-terminal domain. In Salmonella schwarzengrund (strain CVM19633), this protein is Bifunctional protein GlmU.